We begin with the raw amino-acid sequence, 194 residues long: ATP-dependent Clp protease proteolytic subunit (194 aa).

Ser98 acts as the Nucleophile in catalysis. Residue His123 is part of the active site.

This sequence belongs to the peptidase S14 family. In terms of assembly, fourteen ClpP subunits assemble into 2 heptameric rings which stack back to back to give a disk-like structure with a central cavity, resembling the structure of eukaryotic proteasomes.

The protein resides in the cytoplasm. The enzyme catalyses Hydrolysis of proteins to small peptides in the presence of ATP and magnesium. alpha-casein is the usual test substrate. In the absence of ATP, only oligopeptides shorter than five residues are hydrolyzed (such as succinyl-Leu-Tyr-|-NHMec, and Leu-Tyr-Leu-|-Tyr-Trp, in which cleavage of the -Tyr-|-Leu- and -Tyr-|-Trp bonds also occurs).. In terms of biological role, cleaves peptides in various proteins in a process that requires ATP hydrolysis. Has a chymotrypsin-like activity. Plays a major role in the degradation of misfolded proteins. In Alkaliphilus metalliredigens (strain QYMF), this protein is ATP-dependent Clp protease proteolytic subunit.